The sequence spans 483 residues: UDP-N-acetylmuramoyl-L-alanyl-D-glutamate--2,6-diaminopimelate ligase (483 aa).

Ser-30 is a binding site for UDP-N-acetyl-alpha-D-muramoyl-L-alanyl-D-glutamate. 109-115 (GTNGKTT) is a binding site for ATP. Residues 151–152 (TT), Ser-178, and Arg-186 contribute to the UDP-N-acetyl-alpha-D-muramoyl-L-alanyl-D-glutamate site. Lys-218 is subject to N6-carboxylysine. Meso-2,6-diaminopimelate-binding positions include Arg-380, 403–406 (DNPR), Gly-453, and Glu-457. A Meso-diaminopimelate recognition motif motif is present at residues 403–406 (DNPR).

Belongs to the MurCDEF family. MurE subfamily. Mg(2+) serves as cofactor. Carboxylation is probably crucial for Mg(2+) binding and, consequently, for the gamma-phosphate positioning of ATP.

It localises to the cytoplasm. It carries out the reaction UDP-N-acetyl-alpha-D-muramoyl-L-alanyl-D-glutamate + meso-2,6-diaminopimelate + ATP = UDP-N-acetyl-alpha-D-muramoyl-L-alanyl-gamma-D-glutamyl-meso-2,6-diaminopimelate + ADP + phosphate + H(+). It functions in the pathway cell wall biogenesis; peptidoglycan biosynthesis. In terms of biological role, catalyzes the addition of meso-diaminopimelic acid to the nucleotide precursor UDP-N-acetylmuramoyl-L-alanyl-D-glutamate (UMAG) in the biosynthesis of bacterial cell-wall peptidoglycan. The protein is UDP-N-acetylmuramoyl-L-alanyl-D-glutamate--2,6-diaminopimelate ligase of Chlamydia caviae (strain ATCC VR-813 / DSM 19441 / 03DC25 / GPIC) (Chlamydophila caviae).